The following is a 219-amino-acid chain: uncharacterized protein (219 aa).

One can recognise an HD domain in the interval 57-158; that stretch reads QLEHMTRAAM…LSEASRQTLL (102 aa).

This is an uncharacterized protein from Acanthamoeba polyphaga mimivirus (APMV).